A 538-amino-acid chain; its full sequence is Efflux pump radE (538 aa).

3 stretches are compositionally biased toward basic and acidic residues: residues 1 to 12 (MATSRDFGREPP), 20 to 35 (EAGHTLHDGCQHVSEH), and 65 to 74 (DPKEEERDPN). 2 disordered regions span residues 1–35 (MATSRDFGREPPRQQQDSDEAGHTLHDGCQHVSEH) and 65–90 (DPKEEERDPNIVDWDGPDDPANPQNW). 12 helical membrane-spanning segments follow: residues 100–120 (AVLSIITFMVPLASSMFAPGI), 134–154 (LATFVVSVYILGLAAGPLVLA), 163–183 (VVIYHVGNVLFIIFTVACALS), 194–214 (FLCGLVGAGPIAIGGGTIADL), 225–245 (SVWSLGPLLGPSVGPVAGGFL), 253–273 (WIFWVLAITAGVITIAGLLVL), 327–347 (PICLVLSVYSAFVYAMIYFMI), 362–382 (EGIVGLVYIALGLGMLFGVVV), 409–429 (IPPTLLAGFLIPTGLFIYGWT), 436–456 (WAVPLLGALLAGMGICIINIS), 482–502 (IFGATFPLFALQMYETLGLGW), and 505–525 (SLLAFIAVAMFAIPPLLFYYG).

Belongs to the major facilitator superfamily.

The protein localises to the cell membrane. Its function is as follows. Efflux pump that might be required for efficient secretion of radicicol or other secondary metabolies produced by the radicicol gene cluster. This chain is Efflux pump radE, found in Floropilus chiversii (Chaetomium chiversii).